We begin with the raw amino-acid sequence, 110 residues long: Cell division protein FtsB (110 aa).

The Cytoplasmic segment spans residues 1-3; the sequence is MRL. The helical transmembrane segment at 4–21 threads the bilayer; it reads IILCLAALVLLIQFPLWL. The Periplasmic segment spans residues 22 to 110; that stretch reads GKGGWLRVWD…PPKIEPKEKR (89 aa). Residues 31–64 are a coiled coil; it reads DLDQQVIAAQKKNDELRARNAKLNSEVQDLKEGT.

This sequence belongs to the FtsB family. In terms of assembly, part of a complex composed of FtsB, FtsL and FtsQ.

It localises to the cell inner membrane. Functionally, essential cell division protein. May link together the upstream cell division proteins, which are predominantly cytoplasmic, with the downstream cell division proteins, which are predominantly periplasmic. The sequence is that of Cell division protein FtsB from Herminiimonas arsenicoxydans.